Here is a 353-residue protein sequence, read N- to C-terminus: Alternative oxidase, mitochondrial (353 aa).

A disordered region spans residues 25-45; it reads FRSTDDEDENNPSTELATDTT. The segment covering 35–45 has biased composition (polar residues); the sequence is NPSTELATDTT. Residues 153-173 form a helical membrane-spanning segment; the sequence is FLFLESIAGVPGMVAGMIRHL. 3 residues coordinate Fe cation: Glu-157, Glu-196, and His-199. Residues 217-237 form a helical membrane-spanning segment; that stretch reads LLIGQIIFYNLFFISYLISPA. Positions 247, 301, and 304 each coordinate Fe cation.

This sequence belongs to the alternative oxidase family. Requires Fe cation as cofactor.

It is found in the mitochondrion inner membrane. Its function is as follows. Catalyzes cyanide-resistant oxygen consumption. May increase respiration when the cytochrome respiratory pathway is restricted, or in response to low temperatures. In Yarrowia lipolytica (strain CLIB 122 / E 150) (Yeast), this protein is Alternative oxidase, mitochondrial (AOX).